Here is a 353-residue protein sequence, read N- to C-terminus: Probable peptide ABC transporter ATP-binding protein y4tS (353 aa).

The ABC transporter domain occupies 6 to 256 (LKVESLTKHY…PVHPYTEALI (251 aa)). 49 to 56 (GESGCGKS) contributes to the ATP binding site.

It belongs to the ABC transporter superfamily.

The protein localises to the cell inner membrane. In terms of biological role, probably part of a binding-protein-dependent transport system y4tOPQRS for a peptide. Probably responsible for energy coupling to the transport system. The protein is Probable peptide ABC transporter ATP-binding protein y4tS of Sinorhizobium fredii (strain NBRC 101917 / NGR234).